A 1775-amino-acid chain; its full sequence is Atrochrysone carboxylic acid synthase (1775 aa).

The Starter acyltransferase (SAT) domain occupies 35–262 (LRRLQALSKD…YAKWASLPIF (228 aa)). Positions 400-833 (DSKIAIVGMS…GGNTTMLLEE (434 aa)) constitute a Ketosynthase family 3 (KS3) domain. Catalysis depends on for beta-ketoacyl synthase activity residues cysteine 573, histidine 708, and histidine 750. Residues 934 to 1244 (FAFTGQGAFY…ENNWNTLADS (311 aa)) enclose the Malonyl-CoA:ACP transacylase (MAT) domain. Residues 1313-1631 (TSSIHQVLQE…RSLLPTFFSP (319 aa)) are product template (PT) domain. The tract at residues 1317–1451 (HQVLQEDVTG…SAVVEYGDAN (135 aa)) is N-terminal hotdog fold. The 310-residue stretch at 1317-1626 (HQVLQEDVTG…FRRFPRSLLP (310 aa)) folds into the PKS/mFAS DH domain. Residue histidine 1349 is the Proton acceptor; for dehydratase activity of the active site. The segment at 1480-1626 (AAVLPRNMAY…FRRFPRSLLP (147 aa)) is C-terminal hotdog fold. The active-site Proton donor; for dehydratase activity is aspartate 1537. Residues 1671–1697 (TAAPVPAPAPVPAKRAEPAPAAAQAAA) form a disordered region. Positions 1688-1697 (PAPAAAQAAA) are enriched in low complexity. The region spanning 1697–1774 (ATQNPTITGA…ELKTYIEETF (78 aa)) is the Carrier domain. Serine 1734 carries the post-translational modification O-(pantetheine 4'-phosphoryl)serine.

It catalyses the reaction holo-[ACP] + 8 malonyl-CoA + 8 H(+) = atrochrysone carboxyl-[ACP] + 8 CO2 + 8 CoA + 2 H2O. The protein operates within secondary metabolite biosynthesis. In terms of biological role, non-reducing polyketide synthase; part of the gene cluster that mediates the biosynthesis of physcion, a natural anthraquinone fungicide that can prevent plant fungal infections. The pathway begins with the polyketide synthase AcPKS that condenses 8 malonyl-CoA units to synthesize atrochrysone thioester which is released from the synthase by the atrochrysone carboxyl ACP thioesterase AcTE that breaks the thioester bond and leads to free atrochrysone carboxylic acid. Spontaneous decarboxylation of atrochrysone carboxylic acid leads to the formation of atrochrysone. Then, atrochrysone undergoes spontaneous dehydration and oxidation, giving the products emodin anthrone and emodin. The O-methyltransferase AcOMT then methylates the C-6 hydroxyl of emodin to form physcion. This is Atrochrysone carboxylic acid synthase from Aspergillus chevalieri (Eurotium chevalieri).